The chain runs to 338 residues: MIVAEEHKIAPWKIEEVNNLKKLLKEGQVIALVDMMEVPAVQLQEIRDNIRDLMTLRMSRNTLIKRAIEELAEESNDPKFAKLAECLERGAAIVITDMNPFKLYKTLEDGKAPAPIKAGAIAPSDIVVEAGSTGMPPGPFLGELKGAGLPAVIDKGKIAIKDDTVIVKEGEVVSPKVAVVLSALGIKPTKVGLDLLAAYEDGIVYTSDVLKIDEEEFVQNIQSAFTSAFNLSVNAAIPTTETIETILQKAFTEAKAVSIESAFITDKTVDDILGKAYAQMLSVASEAGEEALDDDLKERVSSTASAVEAKEEEAPKEEKEEEKEEEEEAPAAGLGMLF.

Positions 292–338 (LDDDLKERVSSTASAVEAKEEEAPKEEKEEEKEEEEEAPAAGLGMLF) are disordered. Basic and acidic residues predominate over residues 308–318 (EAKEEEAPKEE). The segment covering 319-329 (KEEEKEEEEEA) has biased composition (acidic residues).

This sequence belongs to the universal ribosomal protein uL10 family. In terms of assembly, part of the 50S ribosomal subunit. Forms part of the ribosomal stalk which helps the ribosome interact with GTP-bound translation factors. Forms a heptameric L10(L12)2(L12)2(L12)2 complex, where L10 forms an elongated spine to which the L12 dimers bind in a sequential fashion.

Functionally, forms part of the ribosomal stalk, playing a central role in the interaction of the ribosome with GTP-bound translation factors. The sequence is that of Large ribosomal subunit protein uL10 from Methanococcus aeolicus (strain ATCC BAA-1280 / DSM 17508 / OCM 812 / Nankai-3).